We begin with the raw amino-acid sequence, 122 residues long: Small ribosomal subunit protein uS13 (122 aa).

Residues 95–116 (GLPVRGQKTKTNARTRKGRRKT) are compositionally biased toward basic residues. A disordered region spans residues 95–122 (GLPVRGQKTKTNARTRKGRRKTVGAATK).

The protein belongs to the universal ribosomal protein uS13 family. In terms of assembly, part of the 30S ribosomal subunit. Forms a loose heterodimer with protein S19. Forms two bridges to the 50S subunit in the 70S ribosome.

Functionally, located at the top of the head of the 30S subunit, it contacts several helices of the 16S rRNA. In the 70S ribosome it contacts the 23S rRNA (bridge B1a) and protein L5 of the 50S subunit (bridge B1b), connecting the 2 subunits; these bridges are implicated in subunit movement. Contacts the tRNAs in the A and P-sites. The polypeptide is Small ribosomal subunit protein uS13 (Campylobacter curvus (strain 525.92)).